The primary structure comprises 131 residues: Small ribosomal subunit protein uS9 (131 aa).

The protein belongs to the universal ribosomal protein uS9 family.

The polypeptide is Small ribosomal subunit protein uS9 (Actinobacillus succinogenes (strain ATCC 55618 / DSM 22257 / CCUG 43843 / 130Z)).